Here is a 199-residue protein sequence, read N- to C-terminus: Fe/S biogenesis protein NfuA (199 aa).

Residues Cys156 and Cys159 each contribute to the [4Fe-4S] cluster site.

Belongs to the NfuA family. Homodimer. Requires [4Fe-4S] cluster as cofactor.

Involved in iron-sulfur cluster biogenesis. Binds a 4Fe-4S cluster, can transfer this cluster to apoproteins, and thereby intervenes in the maturation of Fe/S proteins. Could also act as a scaffold/chaperone for damaged Fe/S proteins. The polypeptide is Fe/S biogenesis protein NfuA (Haemophilus ducreyi (strain 35000HP / ATCC 700724)).